The primary structure comprises 358 residues: MFDQLDIVEERYEQLNEMLSDPDVVNNPDNLRKYSKEQAELQKTVDVYRDYKQTKEDISEVEEMLRDTKDNDEIEMLKEEHQTLQNKVPKLEEELKFLLIPKDPNDDKDVIVEIRAAAGGDEAAIFAGDLFRMYSKYAETLNYKTDIVEVTESDHGGYKEISFSVSGNGAFSKLKYENGAHRVQRVPETESGGRIHTSTATVAVLPEVEDVEIEVRNEDLKIDTYRSSGAGGQHVNTTDSAVRITHIPTGVIATSSEKSQIQNREKALKVLKARLFDMKLQEEQQKYAAQRKSAVGTGDRSERIRTYNYPQSRVTDHRIGLTLQKLDQIMEGKLDEIIDALTLAEQTDKLKELNNGEL.

Residue glutamine 233 is modified to N5-methylglutamine.

The protein belongs to the prokaryotic/mitochondrial release factor family. Methylated by PrmC. Methylation increases the termination efficiency of RF1.

The protein resides in the cytoplasm. In terms of biological role, peptide chain release factor 1 directs the termination of translation in response to the peptide chain termination codons UAG and UAA. The polypeptide is Peptide chain release factor 1 (Staphylococcus saprophyticus subsp. saprophyticus (strain ATCC 15305 / DSM 20229 / NCIMB 8711 / NCTC 7292 / S-41)).